The sequence spans 2146 residues: Phospholipid-transporting ATPase ABCA7 (2146 aa).

Residues 22 to 42 form a helical membrane-spanning segment; it reads PVQLLVELLWPLFLFFILVAV. At 43 to 549 the chain is on the extracellular side; the sequence is RHSHPPLEHH…DVFLRVLSRS (507 aa). C75 and C225 are oxidised to a cystine. N312 carries N-linked (GlcNAc...) asparagine glycosylation. 6 helical membrane-spanning segments follow: residues 550-570, 593-613, 626-646, 655-675, 687-707, and 727-747; these read LPLFLTLAWIYSVTLTVKAVV, LGWFLSCLGPFLLSAALLVLV, GVVFLFLAAFAVATVTQSFLL, LAAACGGLAYFSLYLPYVLCV, VAASLLSPVAFGFGCESLALL, and VFSLAQVSGLLLLDAALYGLA. The 232-residue stretch at 807-1038 folds into the ABC transporter 1 domain; it reads VSVRSLEKRF…LGSGYYLTLV (232 aa). Position 841 to 848 (841 to 848) interacts with ATP; the sequence is GHNGAGKT. Residues 849–869 form a helical membrane-spanning segment; sequence TTLSILSGLFPPSGGSAFILG. The segment covering 1048-1066 has biased composition (basic and acidic residues); sequence EKADTDMEGSVDTRQEKKN. 2 disordered regions span residues 1048 to 1072 and 1185 to 1209; these read EKADTDMEGSVDTRQEKKNGSQGSR and TALENGEPAGSAPETDQGSGPDAVG. Residues 1243 to 1263 form a helical membrane-spanning segment; the sequence is IVLPALFVGLALVFSLIVPPF. Topologically, residues 1264–1537 are extracellular; sequence GHYPALRLSP…ALMASSVDVL (274 aa). C1345 and C1359 form a disulfide bridge. 6 helical membrane passes run 1538-1558, 1584-1604, 1621-1641, 1649-1669, 1683-1703, and 1729-1749; these read VSICVVFAMSFVPASFTLVLI, FLWDMCNYLVPACIVVLIFLA, LLLLLYGWSITPLMYPASFFF, VVLTCINLFIGINGSMATFVL, ILKQVFLIFPHFCLGRGLIDM, and VVGKNLLAMVIQGPLFLLFTL. In terms of domain architecture, ABC transporter 2 spans 1793–2025; sequence LVLRNLTKVY…FAAGHTLTLR (233 aa). An ATP-binding site is contributed by 1827–1834; it reads GVNGAGKT. Residues 2104–2146 form a disordered region; the sequence is QGKDEDTEEQKEAGVGVDPAPGLQHPKRVSQFLDDPSTAETVL.

The protein belongs to the ABC transporter superfamily. ABCA family. N-glycosylated. In terms of tissue distribution, expressed in leukocytes (at protein level). Widely expressed. Highly expressed in myelo-lymphatic tissues including peripheral leukocytes, thymus, spleen and bone marrow. Expressed in the hippocampus and the cerebellum. Isoform 2: Abundant in lymph node, spleen, thymus and trachea. Isoform 1: Strongly expressed in brain and bone marrow.

The protein localises to the cell membrane. It is found in the golgi apparatus membrane. It localises to the early endosome membrane. The protein resides in the cytoplasm. Its subcellular location is the cell projection. The protein localises to the ruffle membrane. It is found in the phagocytic cup. It localises to the endoplasmic reticulum. It catalyses the reaction ATP + H2O + phospholipidSide 1 = ADP + phosphate + phospholipidSide 2.. The catalysed reaction is a 1,2-diacyl-sn-glycero-3-phosphocholine(out) + ATP + H2O = a 1,2-diacyl-sn-glycero-3-phosphocholine(in) + ADP + phosphate + H(+). The enzyme catalyses a 1,2-diacyl-sn-glycero-3-phospho-L-serine(out) + ATP + H2O = a 1,2-diacyl-sn-glycero-3-phospho-L-serine(in) + ADP + phosphate + H(+). Its activity is regulated as follows. ATPase activity is decreased by cholesterol and ceramide. ATPase activity is stimulated by phosphatidylserine, phosphatidylcholine and sphingomyelin, but phosphatidylserine is more effective. Functionally, catalyzes the translocation of specific phospholipids from the cytoplasmic to the extracellular/lumenal leaflet of membrane coupled to the hydrolysis of ATP. Transports preferentially phosphatidylserine over phosphatidylcholine. Plays a role in lipid homeostasis and macrophage-mediated phagocytosis. Binds APOA1 and may function in apolipoprotein-mediated phospholipid efflux from cells. May also mediate cholesterol efflux. May regulate cellular ceramide homeostasis during keratinocyte differentiation. Involved in lipid raft organization and CD1D localization on thymocytes and antigen-presenting cells, which plays an important role in natural killer T-cell development and activation. Plays a role in phagocytosis of apoptotic cells by macrophages. Macrophage phagocytosis is stimulated by APOA1 or APOA2, probably by stabilization of ABCA7. Also involved in phagocytic clearance of amyloid-beta by microglia cells and macrophages. Further limits amyloid-beta production by playing a role in the regulation of amyloid-beta A4 precursor protein (APP) endocytosis and/or processing. Amyloid-beta is the main component of amyloid plaques found in the brains of Alzheimer patients. The chain is Phospholipid-transporting ATPase ABCA7 from Homo sapiens (Human).